The chain runs to 269 residues: Nitrogen regulatory protein DAL80 (269 aa).

Residues Cys31 to Cys55 form a GATA-type zinc finger.

Its subcellular location is the nucleus. Negative regulator of multiple nitrogen catabolic genes including the allantoin pathway genes. The polypeptide is Nitrogen regulatory protein DAL80 (DAL80) (Saccharomyces cerevisiae (strain ATCC 204508 / S288c) (Baker's yeast)).